The sequence spans 57 residues: Sperm protamine P1-type (57 aa).

A disordered region spans residues 1-57; the sequence is MARYRHNRSRSRSRHRRRRRGHRGGRYRRRRRRGRYGHRRHHRGHSRRRRKRRRSRH.

Belongs to the protamine P1 family. In terms of tissue distribution, testis.

It localises to the nucleus. The protein localises to the chromosome. In terms of biological role, protamines substitute for histones in the chromatin of sperm during the haploid phase of spermatogenesis. They compact sperm DNA into a highly condensed, stable and inactive complex. In Alligator mississippiensis (American alligator), this protein is Sperm protamine P1-type.